The chain runs to 245 residues: Uridylate kinase (245 aa).

Residue 12-15 coordinates ATP; sequence KISG. UMP is bound at residue Gly55. Residues Gly56 and Arg60 each contribute to the ATP site. Residues Asp76 and 137-144 each bind UMP; that span reads AGAPYLTT. Residues Thr164, Tyr171, and Asp174 each coordinate ATP.

This sequence belongs to the UMP kinase family. Homohexamer.

The protein resides in the cytoplasm. It catalyses the reaction UMP + ATP = UDP + ADP. The protein operates within pyrimidine metabolism; CTP biosynthesis via de novo pathway; UDP from UMP (UMPK route): step 1/1. Its activity is regulated as follows. Inhibited by UTP. In terms of biological role, catalyzes the reversible phosphorylation of UMP to UDP. The protein is Uridylate kinase of Chlamydia muridarum (strain MoPn / Nigg).